The sequence spans 245 residues: MATQLHRSLKTPAAVAVRGLSRAFGPRRVIDNLDLAIRPGEFVALLGASGCGKSTLLRILGDLDPEFEGEVVVPSRRAIAFQAPRLMPWKRVWHNVVLGLPGRPDRKRAERALDEVGIGHRADVWPKVLSGGEAQRAALARALVREPDLLLLDEPFAALDALTRIKAQALVAELWQRHGCAILLVTHDVEEAILLADRVLVMKEGVIAHHEPIALDRPRDVADPEFARIRGALLDWLGVAHGAAH.

The 215-residue stretch at Val15 to Ile229 folds into the ABC transporter domain. Residue Gly47–Ser54 participates in ATP binding.

The protein belongs to the ABC transporter superfamily. Aliphatic sulfonates importer (TC 3.A.1.17.2) family. In terms of assembly, the complex is composed of two ATP-binding proteins (SsuB), two transmembrane proteins (SsuC) and a solute-binding protein (SsuA).

It localises to the cell inner membrane. It catalyses the reaction ATP + H2O + aliphatic sulfonate-[sulfonate-binding protein]Side 1 = ADP + phosphate + aliphatic sulfonateSide 2 + [sulfonate-binding protein]Side 1.. Functionally, part of the ABC transporter complex SsuABC involved in aliphatic sulfonates import. Responsible for energy coupling to the transport system. The polypeptide is Aliphatic sulfonates import ATP-binding protein SsuB 2 (Paracoccus denitrificans (strain Pd 1222)).